We begin with the raw amino-acid sequence, 99 residues long: SAGA-associated factor 11 (99 aa).

The SGF11-type zinc-finger motif lies at 71 to 92 (IHCENCGRDVSANRLAAHLQRC).

Belongs to the SGF11 family. As to quaternary structure, component of the 1.8 MDa SAGA transcription coactivator-HAT complex. SAGA is built of 5 distinct domains with specialized functions. Within the SAGA complex, SUS1, SGF11, SGF73 and UBP8 form an additional subcomplex of SAGA called the DUB module (deubiquitination module). Interacts directly with SGF73, SUS1 and UBP8.

It is found in the nucleus. Functionally, functions as a component of the transcription regulatory histone acetylation (HAT) complex SAGA. At the promoters, SAGA is required for recruitment of the basal transcription machinery. It influences RNA polymerase II transcriptional activity through different activities such as TBP interaction and promoter selectivity, interaction with transcription activators, and chromatin modification through histone acetylation and deubiquitination. SAGA acetylates nucleosomal histone H3 to some extent (to form H3K9ac, H3K14ac, H3K18ac and H3K23ac). SAGA interacts with DNA via upstream activating sequences (UASs). Involved in transcriptional regulation of a subset of SAGA-regulated genes. Within the SAGA complex, participates in a subcomplex, that specifically deubiquitinates histones H2B. The sequence is that of SAGA-associated factor 11 from Saccharomyces cerevisiae (strain RM11-1a) (Baker's yeast).